A 49-amino-acid polypeptide reads, in one-letter code: uncharacterized protein (49 aa).

Belongs to the ELIP/psbS family.

It localises to the plastid. Its subcellular location is the cyanelle. Its function is as follows. Possible role in chlorophyll and/or carotenoid binding. This is an uncharacterized protein from Cyanophora paradoxa.